The chain runs to 129 residues: Ribosome-binding factor A (129 aa).

It belongs to the RbfA family. Monomer. Binds 30S ribosomal subunits, but not 50S ribosomal subunits or 70S ribosomes.

The protein localises to the cytoplasm. One of several proteins that assist in the late maturation steps of the functional core of the 30S ribosomal subunit. Associates with free 30S ribosomal subunits (but not with 30S subunits that are part of 70S ribosomes or polysomes). Required for efficient processing of 16S rRNA. May interact with the 5'-terminal helix region of 16S rRNA. The chain is Ribosome-binding factor A from Marinomonas sp. (strain MWYL1).